The primary structure comprises 319 residues: Oligopeptide transport system permease protein OppB (319 aa).

6 consecutive transmembrane segments (helical) span residues Ile-9 to Leu-29, Phe-99 to Val-119, Ser-137 to Tyr-157, Ile-183 to Thr-203, Phe-248 to Tyr-268, and Ala-289 to Met-309. Residues Ala-95–Ser-305 enclose the ABC transmembrane type-1 domain.

This sequence belongs to the binding-protein-dependent transport system permease family. OppBC subfamily. As to quaternary structure, the complex is composed of two ATP-binding proteins (OppD and OppF), two transmembrane proteins (OppB and OppC) and a solute-binding protein (OppA).

The protein resides in the cell membrane. In terms of biological role, part of the ABC transporter complex OppABCDF involved in the uptake of oligopeptides. Probably responsible for the translocation of the substrate across the membrane. Essential for uptake of peptides larger than three amino acids and for growth in milk. The sequence is that of Oligopeptide transport system permease protein OppB (oppB) from Lactococcus lactis subsp. lactis (strain IL1403) (Streptococcus lactis).